Reading from the N-terminus, the 367-residue chain is UDP-N-acetylglucosamine--N-acetylmuramyl-(pentapeptide) pyrophosphoryl-undecaprenol N-acetylglucosamine transferase (367 aa).

UDP-N-acetyl-alpha-D-glucosamine contacts are provided by residues 15 to 17, Asn127, Arg163, Ser191, Ile249, and Gln294; that span reads TGG.

Belongs to the glycosyltransferase 28 family. MurG subfamily.

It localises to the cell inner membrane. The enzyme catalyses di-trans,octa-cis-undecaprenyl diphospho-N-acetyl-alpha-D-muramoyl-L-alanyl-D-glutamyl-meso-2,6-diaminopimeloyl-D-alanyl-D-alanine + UDP-N-acetyl-alpha-D-glucosamine = di-trans,octa-cis-undecaprenyl diphospho-[N-acetyl-alpha-D-glucosaminyl-(1-&gt;4)]-N-acetyl-alpha-D-muramoyl-L-alanyl-D-glutamyl-meso-2,6-diaminopimeloyl-D-alanyl-D-alanine + UDP + H(+). Its pathway is cell wall biogenesis; peptidoglycan biosynthesis. Functionally, cell wall formation. Catalyzes the transfer of a GlcNAc subunit on undecaprenyl-pyrophosphoryl-MurNAc-pentapeptide (lipid intermediate I) to form undecaprenyl-pyrophosphoryl-MurNAc-(pentapeptide)GlcNAc (lipid intermediate II). In Burkholderia pseudomallei (strain 668), this protein is UDP-N-acetylglucosamine--N-acetylmuramyl-(pentapeptide) pyrophosphoryl-undecaprenol N-acetylglucosamine transferase.